Here is a 423-residue protein sequence, read N- to C-terminus: L-cysteine:1D-myo-inositol 2-amino-2-deoxy-alpha-D-glucopyranoside ligase (423 aa).

Cys43 contacts Zn(2+). Residues 43–46, Thr58, and 81–83 each bind L-cysteinyl-5'-AMP; these read CGIT and NVT. The short motif at 45-55 is the 'HIGH' region element; sequence ITPYDATHMGH. The short motif at 199–204 is the 'ERGGDP' region element; that stretch reads ERGGDP. Trp240 is an L-cysteinyl-5'-AMP binding site. Zn(2+) is bound at residue Cys244. L-cysteinyl-5'-AMP is bound at residue 262 to 264; the sequence is GSD. His269 lines the Zn(2+) pocket. Residue Val295 coordinates L-cysteinyl-5'-AMP. The 'KMSKS' region motif lies at 301–305; sequence KMSKS.

This sequence belongs to the class-I aminoacyl-tRNA synthetase family. MshC subfamily. As to quaternary structure, monomer. Zn(2+) serves as cofactor.

The catalysed reaction is 1D-myo-inositol 2-amino-2-deoxy-alpha-D-glucopyranoside + L-cysteine + ATP = 1D-myo-inositol 2-(L-cysteinylamino)-2-deoxy-alpha-D-glucopyranoside + AMP + diphosphate + H(+). In terms of biological role, catalyzes the ATP-dependent condensation of GlcN-Ins and L-cysteine to form L-Cys-GlcN-Ins. The polypeptide is L-cysteine:1D-myo-inositol 2-amino-2-deoxy-alpha-D-glucopyranoside ligase (Renibacterium salmoninarum (strain ATCC 33209 / DSM 20767 / JCM 11484 / NBRC 15589 / NCIMB 2235)).